The chain runs to 494 residues: Aspartyl/glutamyl-tRNA(Asn/Gln) amidotransferase subunit B (494 aa).

It belongs to the GatB/GatE family. GatB subfamily. Heterotrimer of A, B and C subunits.

The enzyme catalyses L-glutamyl-tRNA(Gln) + L-glutamine + ATP + H2O = L-glutaminyl-tRNA(Gln) + L-glutamate + ADP + phosphate + H(+). The catalysed reaction is L-aspartyl-tRNA(Asn) + L-glutamine + ATP + H2O = L-asparaginyl-tRNA(Asn) + L-glutamate + ADP + phosphate + 2 H(+). Allows the formation of correctly charged Asn-tRNA(Asn) or Gln-tRNA(Gln) through the transamidation of misacylated Asp-tRNA(Asn) or Glu-tRNA(Gln) in organisms which lack either or both of asparaginyl-tRNA or glutaminyl-tRNA synthetases. The reaction takes place in the presence of glutamine and ATP through an activated phospho-Asp-tRNA(Asn) or phospho-Glu-tRNA(Gln). The sequence is that of Aspartyl/glutamyl-tRNA(Asn/Gln) amidotransferase subunit B from Rhodopseudomonas palustris (strain BisB18).